Consider the following 104-residue polypeptide: Antitoxin HigA-2 (104 aa).

An HTH cro/C1-type domain is found at 45–98; sequence IVSIREQFNMSRGVFARLLHTSSRTLENWEQGRSVPNGQAVTLLKLVQRHPETL. A DNA-binding region (H-T-H motif) is located at residues 56–75; the sequence is RGVFARLLHTSSRTLENWEQ.

In terms of biological role, antitoxin component of a type II toxin-antitoxin (TA) system that counteracts the effect of the HigB-2 toxin. Binds to its own promoter and regulates transcription of the higB-2/higA-2 operon. The sequence is that of Antitoxin HigA-2 (higA-2) from Vibrio cholerae serotype O1 (strain ATCC 39315 / El Tor Inaba N16961).